A 286-amino-acid chain; its full sequence is Bifunctional protein FolD (286 aa).

Residues 166 to 168 and isoleucine 232 each bind NADP(+); that span reads GAS.

Belongs to the tetrahydrofolate dehydrogenase/cyclohydrolase family. In terms of assembly, homodimer.

The catalysed reaction is (6R)-5,10-methylene-5,6,7,8-tetrahydrofolate + NADP(+) = (6R)-5,10-methenyltetrahydrofolate + NADPH. The enzyme catalyses (6R)-5,10-methenyltetrahydrofolate + H2O = (6R)-10-formyltetrahydrofolate + H(+). It participates in one-carbon metabolism; tetrahydrofolate interconversion. Functionally, catalyzes the oxidation of 5,10-methylenetetrahydrofolate to 5,10-methenyltetrahydrofolate and then the hydrolysis of 5,10-methenyltetrahydrofolate to 10-formyltetrahydrofolate. This Marinobacter nauticus (strain ATCC 700491 / DSM 11845 / VT8) (Marinobacter aquaeolei) protein is Bifunctional protein FolD.